Reading from the N-terminus, the 286-residue chain is Bifunctional protein FolD (286 aa).

Residues 170–172 (GHS) and Ile236 each bind NADP(+).

The protein belongs to the tetrahydrofolate dehydrogenase/cyclohydrolase family. Homodimer.

The catalysed reaction is (6R)-5,10-methylene-5,6,7,8-tetrahydrofolate + NADP(+) = (6R)-5,10-methenyltetrahydrofolate + NADPH. The enzyme catalyses (6R)-5,10-methenyltetrahydrofolate + H2O = (6R)-10-formyltetrahydrofolate + H(+). It functions in the pathway one-carbon metabolism; tetrahydrofolate interconversion. Functionally, catalyzes the oxidation of 5,10-methylenetetrahydrofolate to 5,10-methenyltetrahydrofolate and then the hydrolysis of 5,10-methenyltetrahydrofolate to 10-formyltetrahydrofolate. The protein is Bifunctional protein FolD of Methanococcoides burtonii (strain DSM 6242 / NBRC 107633 / OCM 468 / ACE-M).